The chain runs to 125 residues: Gene 61 protein (125 aa).

The sequence is that of Gene 61 protein (61) from Mycobacterium phage D29 (Mycobacteriophage D29).